Consider the following 326-residue polypeptide: Immune-associated nucleotide-binding protein 4 (326 aa).

In terms of domain architecture, AIG1-type G spans 17-225 (EPIKNIVLVG…FTDEMHRKIQ (209 aa)). The segment at 26-33 (GRTGNGKS) is G1. Residues 26–34 (GRTGNGKSA) and Ser47 each bind GTP. The tract at residues 53–57 (GVTMK) is G2. Positions 75–78 (DTPG) are G3. The tract at residues 145-148 (TGGD) is G4. Residues 184 to 186 (DNR) are G5. A GTP-binding site is contributed by Asn185. Residues 217–241 (TDEMHRKIQKEAETLREQQKEVESK) are a coiled coil.

Belongs to the TRAFAC class TrmE-Era-EngA-EngB-Septin-like GTPase superfamily. AIG1/Toc34/Toc159-like paraseptin GTPase family. IAN subfamily. Expressed in radicles of the germinating seeds.

The polypeptide is Immune-associated nucleotide-binding protein 4 (Arabidopsis thaliana (Mouse-ear cress)).